A 129-amino-acid chain; its full sequence is Small ribosomal subunit protein uS8 (129 aa).

This sequence belongs to the universal ribosomal protein uS8 family. Part of the 30S ribosomal subunit. Contacts proteins S5 and S12.

Its function is as follows. One of the primary rRNA binding proteins, it binds directly to 16S rRNA central domain where it helps coordinate assembly of the platform of the 30S subunit. This is Small ribosomal subunit protein uS8 from Colwellia psychrerythraea (strain 34H / ATCC BAA-681) (Vibrio psychroerythus).